The primary structure comprises 366 residues: Ferredoxin--NADP reductase (366 aa).

Asp-51, Gln-59, Tyr-64, Val-104, Phe-139, Asp-308, and Thr-349 together coordinate FAD.

It belongs to the ferredoxin--NADP reductase type 2 family. Homodimer. The cofactor is FAD.

It catalyses the reaction 2 reduced [2Fe-2S]-[ferredoxin] + NADP(+) + H(+) = 2 oxidized [2Fe-2S]-[ferredoxin] + NADPH. The polypeptide is Ferredoxin--NADP reductase (Methylibium petroleiphilum (strain ATCC BAA-1232 / LMG 22953 / PM1)).